The primary structure comprises 59 residues: UPF0434 protein Rsph17029_0141 (59 aa).

It belongs to the UPF0434 family.

This is UPF0434 protein Rsph17029_0141 from Cereibacter sphaeroides (strain ATCC 17029 / ATH 2.4.9) (Rhodobacter sphaeroides).